A 733-amino-acid chain; its full sequence is ATP-dependent RNA helicase DBP7 (733 aa).

Disordered stretches follow at residues 1 to 92 and 119 to 139; these read MDED…SKMI and SSQL…SNAP. Over residues 17-30 the composition is skewed to polar residues; sequence SVSSGSNKRTTSKV. The segment covering 52 to 80 has biased composition (basic and acidic residues); that stretch reads QKKDRSATGKDDGKKHENDESNDSKKRPT. A Q motif motif is present at residues 144–173; the sequence is STFEGLGINERLSKHLTETLRFKNPTKVQK. In terms of domain architecture, Helicase ATP-binding spans 177 to 372; the sequence is PTMLSTERDL…SIILNNPEMI (196 aa). 190-197 provides a ligand contact to ATP; it reads AQTGSGKT. The DEAD box signature appears at 304–307; sequence DEGD. The 191-residue stretch at 406-596 folds into the Helicase C-terminal domain; the sequence is TLSAILKKIS…NYENYLKDGF (191 aa). Residues 687 to 714 are disordered; that stretch reads KKLGKSVESNSGIQGASKKTKKEDPRKK.

The protein belongs to the DEAD box helicase family. DDX31/DBP7 subfamily.

It localises to the nucleus. The protein localises to the nucleolus. It carries out the reaction ATP + H2O = ADP + phosphate + H(+). Its function is as follows. ATP-binding RNA helicase involved in the biogenesis of 60S ribosomal subunits and is required for the normal formation of 25S and 5.8S rRNAs. This is ATP-dependent RNA helicase DBP7 (DPB7) from Scheffersomyces stipitis (strain ATCC 58785 / CBS 6054 / NBRC 10063 / NRRL Y-11545) (Yeast).